Consider the following 106-residue polypeptide: Iron-sulfur cluster assembly protein CyaY (106 aa).

The protein belongs to the frataxin family.

In terms of biological role, involved in iron-sulfur (Fe-S) cluster assembly. May act as a regulator of Fe-S biogenesis. The protein is Iron-sulfur cluster assembly protein CyaY of Yersinia pseudotuberculosis serotype O:3 (strain YPIII).